A 222-amino-acid polypeptide reads, in one-letter code: Probable transaldolase (222 aa).

K91 functions as the Schiff-base intermediate with substrate in the catalytic mechanism.

It belongs to the transaldolase family. Type 3B subfamily.

The protein resides in the cytoplasm. It catalyses the reaction D-sedoheptulose 7-phosphate + D-glyceraldehyde 3-phosphate = D-erythrose 4-phosphate + beta-D-fructose 6-phosphate. The protein operates within carbohydrate degradation; pentose phosphate pathway; D-glyceraldehyde 3-phosphate and beta-D-fructose 6-phosphate from D-ribose 5-phosphate and D-xylulose 5-phosphate (non-oxidative stage): step 2/3. Transaldolase is important for the balance of metabolites in the pentose-phosphate pathway. The polypeptide is Probable transaldolase (Chlorobium limicola (strain DSM 245 / NBRC 103803 / 6330)).